We begin with the raw amino-acid sequence, 115 residues long: MHEFSIVQSLLTLIEDYARENNAKSVTKVVVSIGVLSGVEPHLLEMAFNTFKEGTVAEKAELIMEIEKLKIKCMDCGKESEKEELNMLCPGCGSLNTQIISGQDMFLKSLELEVD.

His2 serves as a coordination point for Ni(2+). Residues Cys73, Cys76, Cys89, and Cys92 each coordinate Zn(2+).

Belongs to the HypA/HybF family.

Its function is as follows. Involved in the maturation of [NiFe] hydrogenases. Required for nickel insertion into the metal center of the hydrogenase. The protein is Hydrogenase maturation factor HypA of Aquifex aeolicus (strain VF5).